Reading from the N-terminus, the 197-residue chain is Adenylyl-sulfate kinase (197 aa).

33-40 (GLSGSGKS) provides a ligand contact to ATP. Ser107 functions as the Phosphoserine intermediate in the catalytic mechanism.

The protein belongs to the APS kinase family.

The enzyme catalyses adenosine 5'-phosphosulfate + ATP = 3'-phosphoadenylyl sulfate + ADP + H(+). The protein operates within sulfur metabolism; hydrogen sulfide biosynthesis; sulfite from sulfate: step 2/3. In terms of biological role, catalyzes the synthesis of activated sulfate. The polypeptide is Adenylyl-sulfate kinase (Bacillus licheniformis (strain ATCC 14580 / DSM 13 / JCM 2505 / CCUG 7422 / NBRC 12200 / NCIMB 9375 / NCTC 10341 / NRRL NRS-1264 / Gibson 46)).